The primary structure comprises 250 residues: DNA polymerase sliding clamp (250 aa).

This sequence belongs to the PCNA family. As to quaternary structure, homotrimer. The subunits circularize to form a toroid; DNA passes through its center. Replication factor C (RFC) is required to load the toroid on the DNA.

Sliding clamp subunit that acts as a moving platform for DNA processing. Responsible for tethering the catalytic subunit of DNA polymerase and other proteins to DNA during high-speed replication. The polypeptide is DNA polymerase sliding clamp (Methanococcus maripaludis (strain C5 / ATCC BAA-1333)).